We begin with the raw amino-acid sequence, 344 residues long: tRNA N6-adenosine threonylcarbamoyltransferase (344 aa).

Fe cation-binding residues include His-110 and His-114. Residues 132–136 (LVSGG), Asp-166, Gly-179, Asp-183, and Asn-278 contribute to the substrate site. Position 306 (Asp-306) interacts with Fe cation.

The protein belongs to the KAE1 / TsaD family. The cofactor is Fe(2+).

It is found in the cytoplasm. It carries out the reaction L-threonylcarbamoyladenylate + adenosine(37) in tRNA = N(6)-L-threonylcarbamoyladenosine(37) in tRNA + AMP + H(+). Functionally, required for the formation of a threonylcarbamoyl group on adenosine at position 37 (t(6)A37) in tRNAs that read codons beginning with adenine. Is involved in the transfer of the threonylcarbamoyl moiety of threonylcarbamoyl-AMP (TC-AMP) to the N6 group of A37, together with TsaE and TsaB. TsaD likely plays a direct catalytic role in this reaction. The sequence is that of tRNA N6-adenosine threonylcarbamoyltransferase from Nocardia farcinica (strain IFM 10152).